The sequence spans 151 residues: UPF0561 protein C2orf68 homolog (151 aa).

Residues 1 to 89 (MEEEGEAQGR…TLKDEPNDNG (89 aa)) are disordered. 2 stretches are compositionally biased toward basic and acidic residues: residues 32 to 46 (LARD…QAKE) and 70 to 85 (RQRE…KDEP).

This sequence belongs to the UPF0561 family.

This is UPF0561 protein C2orf68 homolog from Xenopus laevis (African clawed frog).